The chain runs to 425 residues: Adenylosuccinate synthetase (425 aa).

GTP-binding positions include 12-18 and 40-42; these read GDEGKGK and GHT. The Proton acceptor role is filled by D13. 2 residues coordinate Mg(2+): D13 and G40. IMP is bound by residues 13–16, 38–41, T126, R140, Q221, T236, and R300; these read DEGK and NAGH. The active-site Proton donor is the H41. 296–302 contributes to the substrate binding site; that stretch reads ATTGRPR. Residues R302, 328–330, and 410–412 each bind GTP; these read KLD and STG.

It belongs to the adenylosuccinate synthetase family. As to quaternary structure, homodimer. Requires Mg(2+) as cofactor.

It localises to the cytoplasm. It catalyses the reaction IMP + L-aspartate + GTP = N(6)-(1,2-dicarboxyethyl)-AMP + GDP + phosphate + 2 H(+). Its pathway is purine metabolism; AMP biosynthesis via de novo pathway; AMP from IMP: step 1/2. Functionally, plays an important role in the de novo pathway of purine nucleotide biosynthesis. Catalyzes the first committed step in the biosynthesis of AMP from IMP. This Thermodesulfovibrio yellowstonii (strain ATCC 51303 / DSM 11347 / YP87) protein is Adenylosuccinate synthetase.